A 570-amino-acid chain; its full sequence is Urease subunit alpha (570 aa).

In terms of domain architecture, Urease spans 132–570; that stretch reads GGFDSHIHYI…LPLAQRYFLF (439 aa). 3 residues coordinate Ni(2+): His137, His139, and Lys220. N6-carboxylysine is present on Lys220. Substrate is bound at residue His222. Ni(2+) contacts are provided by His249 and His275. His323 acts as the Proton donor in catalysis. A Ni(2+)-binding site is contributed by Asp363.

The protein belongs to the metallo-dependent hydrolases superfamily. Urease alpha subunit family. As to quaternary structure, heterotrimer of UreA (gamma), UreB (beta) and UreC (alpha) subunits. Three heterotrimers associate to form the active enzyme. Ni cation serves as cofactor. In terms of processing, carboxylation allows a single lysine to coordinate two nickel ions.

The protein resides in the cytoplasm. The catalysed reaction is urea + 2 H2O + H(+) = hydrogencarbonate + 2 NH4(+). Its pathway is nitrogen metabolism; urea degradation; CO(2) and NH(3) from urea (urease route): step 1/1. This chain is Urease subunit alpha, found in Ruegeria sp. (strain TM1040) (Silicibacter sp.).